A 438-amino-acid chain; its full sequence is Probable tRNA pseudouridine synthase D (438 aa).

Catalysis depends on aspartate 86, which acts as the Nucleophile. The TRUD domain maps to 165 to 390 (GVPNFFGIQR…SKGTRREVLL (226 aa)).

This sequence belongs to the pseudouridine synthase TruD family.

The enzyme catalyses uridine(13) in tRNA = pseudouridine(13) in tRNA. Could be responsible for synthesis of pseudouridine from uracil-13 in transfer RNAs. The protein is Probable tRNA pseudouridine synthase D of Methanosarcina mazei (strain ATCC BAA-159 / DSM 3647 / Goe1 / Go1 / JCM 11833 / OCM 88) (Methanosarcina frisia).